Here is a 349-residue protein sequence, read N- to C-terminus: CCN family member 2 (349 aa).

The signal sequence occupies residues 1–26 (MSATGLSPVRCAFVLLLALCSRPASG). The IGFBP N-terminal domain occupies 27 to 98 (QDCSGQCQCA…NRKIGVCTAK (72 aa)). 6 disulfides stabilise this stretch: cysteine 29–cysteine 54, cysteine 33–cysteine 56, cysteine 35–cysteine 57, cysteine 43–cysteine 60, cysteine 68–cysteine 82, and cysteine 74–cysteine 95. In terms of domain architecture, VWFC spans 101 to 167 (APCVFGGTVY…GKCCEEWVCD (67 aa)). Residues 198 to 243 (NCLVQTTEWSACSKTCGMGISTRVTNDNAFCRLEKQSRLCMVRPCE) enclose the TSP type-1 domain. The heparin-binding stretch occupies residues 247–349 (EENIKKGKKC…YYRKMYGDMA (103 aa)). 5 disulfide bridges follow: cysteine 256-cysteine 293, cysteine 273-cysteine 307, cysteine 284-cysteine 323, cysteine 287-cysteine 325, and cysteine 292-cysteine 329. Residues 256–330 (CIRTPKISKP…KTCACHYNCP (75 aa)) form the CTCK domain.

This sequence belongs to the CCN family. Monomer. Interacts with TSKU.

The protein localises to the secreted. It is found in the extracellular space. Its subcellular location is the extracellular matrix. Major connective tissue mitoattractant secreted by vascular endothelial cells. Promotes proliferation and differentiation of chondrocytes. Is involved in the stimulation of osteoblast differentiation and has a critical role in osteogenesis. Mediates heparin- and divalent cation-dependent cell adhesion in many cell types including fibroblasts, myofibroblasts, endothelial and epithelial cells. Enhances fibroblast growth factor-induced DNA synthesis. This chain is CCN family member 2 (CCN2), found in Sus scrofa (Pig).